We begin with the raw amino-acid sequence, 395 residues long: Chaperone protein DnaJ 1 (395 aa).

Residues 10-75 (DFYQELGVSS…AKRKEYDETR (66 aa)) form the J domain. The segment at 164-242 (GVAMPLRLTS…CKGTGVTTRT (79 aa)) adopts a CR-type zinc-finger fold. Zn(2+)-binding residues include C177, C180, C194, C197, C216, C219, C230, and C233. CXXCXGXG motif repeat units follow at residues 177 to 184 (CTNCHGSG), 194 to 201 (CPTCNGSG), 216 to 223 (CTDCRGSG), and 230 to 237 (CEECKGTG).

This sequence belongs to the DnaJ family. As to quaternary structure, homodimer. Zn(2+) is required as a cofactor.

The protein resides in the cytoplasm. Functionally, participates actively in the response to hyperosmotic and heat shock by preventing the aggregation of stress-denatured proteins and by disaggregating proteins, also in an autonomous, DnaK-independent fashion. Unfolded proteins bind initially to DnaJ; upon interaction with the DnaJ-bound protein, DnaK hydrolyzes its bound ATP, resulting in the formation of a stable complex. GrpE releases ADP from DnaK; ATP binding to DnaK triggers the release of the substrate protein, thus completing the reaction cycle. Several rounds of ATP-dependent interactions between DnaJ, DnaK and GrpE are required for fully efficient folding. Also involved, together with DnaK and GrpE, in the DNA replication of plasmids through activation of initiation proteins. In Mycobacterium bovis (strain ATCC BAA-935 / AF2122/97), this protein is Chaperone protein DnaJ 1.